The primary structure comprises 162 residues: 6,7-dimethyl-8-ribityllumazine synthase (162 aa).

5-amino-6-(D-ribitylamino)uracil is bound by residues Tyr27, 58–60, and 87–89; these read ALE and CVI. 92 to 93 is a binding site for (2S)-2-hydroxy-3-oxobutyl phosphate; it reads ET. His95 acts as the Proton donor in catalysis. Asn120 lines the 5-amino-6-(D-ribitylamino)uracil pocket. A (2S)-2-hydroxy-3-oxobutyl phosphate-binding site is contributed by Arg134.

Belongs to the DMRL synthase family.

It catalyses the reaction (2S)-2-hydroxy-3-oxobutyl phosphate + 5-amino-6-(D-ribitylamino)uracil = 6,7-dimethyl-8-(1-D-ribityl)lumazine + phosphate + 2 H2O + H(+). The protein operates within cofactor biosynthesis; riboflavin biosynthesis; riboflavin from 2-hydroxy-3-oxobutyl phosphate and 5-amino-6-(D-ribitylamino)uracil: step 1/2. Functionally, catalyzes the formation of 6,7-dimethyl-8-ribityllumazine by condensation of 5-amino-6-(D-ribitylamino)uracil with 3,4-dihydroxy-2-butanone 4-phosphate. This is the penultimate step in the biosynthesis of riboflavin. The sequence is that of 6,7-dimethyl-8-ribityllumazine synthase from Azorhizobium caulinodans (strain ATCC 43989 / DSM 5975 / JCM 20966 / LMG 6465 / NBRC 14845 / NCIMB 13405 / ORS 571).